The chain runs to 69 residues: NADH dehydrogenase [ubiquinone] 1 beta subcomplex subunit 2 (69 aa).

Belongs to the complex I NDUFB2 subunit family. In terms of assembly, complex I is composed of at least 49 different subunits.

The protein resides in the mitochondrion inner membrane. Accessory subunit of the mitochondrial membrane respiratory chain NADH dehydrogenase (Complex I), that is believed not to be involved in catalysis. Complex I functions in the transfer of electrons from NADH to the respiratory chain. The immediate electron acceptor for the enzyme is believed to be ubiquinone. This Arabidopsis thaliana (Mouse-ear cress) protein is NADH dehydrogenase [ubiquinone] 1 beta subcomplex subunit 2.